We begin with the raw amino-acid sequence, 549 residues long: Cation/acetate symporter ActP (549 aa).

13 helical membrane-spanning segments follow: residues 33–53, 77–97, 103–123, 148–168, 183–203, 206–226, 262–282, 303–323, 355–375, 404–424, 428–448, 464–484, and 493–513; these read WQAI…TYWA, LAIA…ALVF, GLIY…LIAE, ILSA…QMVG, IAVV…GMLA, WVQI…AFMV, ISAL…PHIL, GFMG…IMLV, LFLG…VAGL, VSKI…ILFE, IAFM…PIIL, GGWL…TIWV, and IFPY…GIWF.

This sequence belongs to the sodium:solute symporter (SSF) (TC 2.A.21) family.

It is found in the cell inner membrane. Transports acetate. In Salmonella newport (strain SL254), this protein is Cation/acetate symporter ActP.